A 421-amino-acid chain; its full sequence is PDZ and LIM domain protein 7 (421 aa).

The PDZ domain occupies 1–85 (MEEYKVTLDG…KLGLVLSRFA (85 aa)). The tract at residues 115-193 (IARPFGSGTP…STGPAVRPPW (79 aa)) is disordered. A compositionally biased stretch (polar residues) spans 147 to 172 (YPSSQMPQGQLQNGQKSRTVSNVSGK). 3 consecutive LIM zinc-binding domains span residues 244–302 (PVCS…ARFA), 303–362 (PNCA…MFGT), and 363–421 (KCRG…FSNV).

It localises to the cytoplasm. Its subcellular location is the cytoskeleton. May function as a scaffold on which the coordinated assembly of proteins can occur. May play a role as an adapter that, via its PDZ domain, localizes LIM-binding proteins to actin filaments of both skeletal muscle and nonmuscle tissues. This chain is PDZ and LIM domain protein 7 (pdlim7), found in Xenopus laevis (African clawed frog).